Reading from the N-terminus, the 2344-residue chain is Mucin-4 (2344 aa).

The first 30 residues, 1–30 (MRGPHGVSWRVPWLCLSCLCSCLLLLPVNT), serve as a signal peptide directing secretion. The span at 32–46 (TTSAPKTSTALPSST) shows a compositional bias: low complexity. Disordered stretches follow at residues 32–760 (TTSA…QGSI), 773–1036 (QKMS…TTST), 1072–1130 (VPSL…TPSV), 1171–1197 (STVAHRQSTQRSSTHSQSYLTESMGAS), and 1233–1269 (SGLTTKTDNDRSTALSATSLTLPAPSTSTASRSTVPP). Positions 47-100 (NPSQMTSQVSNPTASSYRMTKNTGQASPMVTSSSITTLPQSQHTGSMKTTRNPQ) are enriched in polar residues. Positions 81–1006 (ITTLPQSQHT…VSTLVTSTQE (926 aa)) are variable number of tandem repeats (VNTR). Composition is skewed to low complexity over residues 101 to 116 (TTGTTEVTTTLSASSS) and 123 to 137 (TTSQTTLSPDTTTTS). An O-linked (GalNAc...) threonine glycan is attached at Thr133. Over residues 142–225 (ESSSPPSTSV…GGMKTTRNPQ (84 aa)) the composition is skewed to polar residues. Positions 226–273 (TTGTTEVTTTLSASSSDHPTSSPESTPGNTAPRTTETSTTTTTKVLMT) are enriched in low complexity. Polar residues predominate over residues 274–305 (SLQQKLPTGSTLGTSTQELTTLPQSQHTGIMK). Low complexity-rich tracts occupy residues 306-322 (TTSRTQTTTPTEVTTRT) and 335-349 (TSSQTTLSPDTTTTS). The span at 373 to 436 (SGDTGHTMAV…GMKTTRNPQR (64 aa)) shows a compositional bias: polar residues. Thr391 and Thr392 each carry an O-linked (GalNAc...) threonine glycan. Residues 437–446 (TTPTEVTTST) show a composition bias toward low complexity. Residues 447–468 (LSASSSDQVQVETTSRATLSPD) show a composition bias toward polar residues. Over residues 469-492 (TTTTSHAPSVSSSSPSPPSTEGTS) the composition is skewed to low complexity. O-linked (GalNAc...) threonine glycosylation is present at Thr470. Ser479 is a glycosylation site (O-linked (GalNAc...) serine). Residues 493 to 509 (VDTGLTTAVTTQDSTPA) are compositionally biased toward polar residues. The span at 510-546 (TTQGSLTSSSQTLSTVSPLSTSTQETSTQELTSSQSQ) shows a compositional bias: low complexity. Positions 547–580 (HTGSMKTTHNPQTTRNTEVTTTLSASSSDQVQVE) are enriched in polar residues. Residues 581 to 594 (TTSQTTLSDATTTS) are compositionally biased toward low complexity. Residues 599–682 (ESSSPPSTSD…GGMKTTRNPQ (84 aa)) are compositionally biased toward polar residues. Composition is skewed to low complexity over residues 683–698 (TTGTTEVTTTLSASSS) and 705–719 (TSSQTTLSPDTTTTS). Polar residues-rich tracts occupy residues 724 to 760 (ESSSPPSTSDMLTTTASTEGTSGDTGHTTAVTTQGSI) and 773 to 807 (QKMSTVSTPTTSSIQELSTLPQSQHTGSMEISSRP). Residues 808–828 (QTTSVTSTLSSSPSGSTPVQT) are compositionally biased toward low complexity. Over residues 829 to 868 (RSVTSSSDERTNPTSSGVSNTSPATTEVLTPTSSPESTPG) the composition is skewed to polar residues. Over residues 869–915 (NTAPRTTETSTTTTTKVLMTSLQQKLPTGSTLGTSTPTEVTTTLSAS) the composition is skewed to low complexity. Positions 916–994 (SSDQVQVETT…ISVTPSTQKM (79 aa)) are enriched in polar residues. Residues 995–1015 (STVSTLVTSTQELTSSQSQRT) show a composition bias toward low complexity. Residues 1016–1026 (GSMGTSSKPQA) show a composition bias toward polar residues. Residues 1027 to 1036 (TTPTEVTTST) are compositionally biased toward low complexity. Polar residues predominate over residues 1072–1083 (VPSLMHSSKPQA). Residues 1084 to 1096 (TTPTEVTTSTLSS) are compositionally biased toward low complexity. Positions 1097–1116 (FSRGSTQTQTVSWETSSSGK) are enriched in polar residues. Low complexity-rich tracts occupy residues 1118-1130 (TAPSTSSRRTPSV), 1175-1188 (HRQSTQRSSTHSQS), and 1233-1267 (SGLTTKTDNDRSTALSATSLTLPAPSTSTASRSTV). One can recognise an NIDO domain in the interval 1332–1492 (GHSGVMLISL…TGYTGRCGPT (161 aa)). The disordered stretch occupies residues 1574–1597 (GRHRTGLAAGTTSPLSASSTSSGG). The segment covering 1580 to 1597 (LAAGTTSPLSASSTSSGG) has biased composition (low complexity). One can recognise a VWFD domain in the interval 1609-1804 (RPAWTFGDPH…HYGMTSETNG (196 aa)). 19 N-linked (GlcNAc...) asparagine glycosylation sites follow: Asn1644, Asn1660, Asn1672, Asn1689, Asn1698, Asn1704, Asn1715, Asn1724, Asn1759, Asn1780, Asn1787, Asn1829, Asn1874, Asn1926, Asn1951, Asn1974, Asn1981, Asn2029, and Asn2048. An EGF-like 1 domain is found at 2047–2086 (QNHSCPVNYCYNHGHCDISGPPDCQPTCTCAPAFTGNRCF). Cystine bridges form between Cys2051-Cys2062, Cys2056-Cys2074, and Cys2076-Cys2085. N-linked (GlcNAc...) asparagine glycosylation is found at Asn2114 and Asn2121. Residues 2173-2193 (GPLIHYLNNQLISAVMEAFLL) form a helical membrane-spanning segment. Asn2227 carries an N-linked (GlcNAc...) asparagine glycan. In terms of domain architecture, EGF-like 2 spans 2256–2295 (VSPCSEGYCHNGGQCKHLPDGPQCTCATFSIYTSWGERCE). 3 disulfide bridges follow: Cys2259–Cys2270, Cys2264–Cys2279, and Cys2281–Cys2294. A helical membrane pass occupies residues 2301–2321 (LGAFFGILFGALGALLLLAIL).

In terms of assembly, a heterodimeric complex, composed of a mucin-4 alpha chain and a cysteine-rich transmembrane mucin-4 beta chain. Mucin-4 beta chain interacts with ERBB2 via the EGF-like domain 1. In nonpolarized cells, associates with ERBB2 and ERBB3. Proteolytically cleaved into 2 subunits, mucin-4 alpha chain and mucin-4 beta chain. Post-translationally, mucin-4 alpha subunit is highly O-glycosylated. In terms of processing, mucin-4 beta subunit is predominantly N-glycosylated. In terms of tissue distribution, expression is developmentally regulated in the mammary gland, dramatically increases in the lactating gland compared with the virgin mammary gland, while decreasing again during mammary gland involution. Expressed in 13762 ascites cells. Overexpressed in some aggressive mammary tumors. Overexpression seems to block cell-cell and cell-matrix interactions to protect tumor cells from immune surveillance, and to promote metastasis.

Its subcellular location is the cell membrane. The protein resides in the secreted. Its function is as follows. Membrane-bound mucin, a family of highly glycosylated proteins that constitute the major component of the mucus, the slimy and viscous secretion covering epithelial surfaces. These glycoproteins play important roles in the protection of the epithelium and are implicated in epithelial renewal and differentiation. Regulates cellular behavior through both anti-adhesive effects on cell-cell and cell-extracellular matrix interactions and its ability to act as an intramembrane ligand for ERBB2. Plays an important role in proliferation and differentiation of epithelial cells by inducing specific phosphorylation of ERBB2. In polarized epithelial cells, segregates ERBB2 and other ERBB receptors and prevents ERBB2 from acting as a coreceptor. The interaction with ERBB2 leads to enhanced expression of CDKN1B. The formation of a MUC4-ERBB2-ERBB3-NRG1 complex leads to down-regulation of CDKN1B, resulting in repression of apoptosis and stimulation of proliferation. Its ability to promote tumor growth may be mainly due to repression of apoptosis as opposed to proliferation. The sequence is that of Mucin-4 (Muc4) from Rattus norvegicus (Rat).